Consider the following 358-residue polypeptide: Phosphoserine aminotransferase (358 aa).

Residue Arg41 participates in L-glutamate binding. Pyridoxal 5'-phosphate-binding positions include Ala75–Ser76, Trp100, Thr148, Asp167, and Gln190. Lys191 carries the post-translational modification N6-(pyridoxal phosphate)lysine. Asn233 to Thr234 is a pyridoxal 5'-phosphate binding site.

This sequence belongs to the class-V pyridoxal-phosphate-dependent aminotransferase family. SerC subfamily. As to quaternary structure, homodimer. It depends on pyridoxal 5'-phosphate as a cofactor.

The protein localises to the cytoplasm. The enzyme catalyses O-phospho-L-serine + 2-oxoglutarate = 3-phosphooxypyruvate + L-glutamate. It catalyses the reaction 4-(phosphooxy)-L-threonine + 2-oxoglutarate = (R)-3-hydroxy-2-oxo-4-phosphooxybutanoate + L-glutamate. It functions in the pathway amino-acid biosynthesis; L-serine biosynthesis; L-serine from 3-phospho-D-glycerate: step 2/3. Its pathway is cofactor biosynthesis; pyridoxine 5'-phosphate biosynthesis; pyridoxine 5'-phosphate from D-erythrose 4-phosphate: step 3/5. Catalyzes the reversible conversion of 3-phosphohydroxypyruvate to phosphoserine and of 3-hydroxy-2-oxo-4-phosphonooxybutanoate to phosphohydroxythreonine. The protein is Phosphoserine aminotransferase of Campylobacter lari (strain RM2100 / D67 / ATCC BAA-1060).